A 244-amino-acid polypeptide reads, in one-letter code: Ferric aerobactin reductase IutB (244 aa).

The [2Fe-2S] cluster site is built by Cys-220, Cys-221, Cys-232, and Cys-235.

Monomer. Requires [2Fe-2S] cluster as cofactor.

Its subcellular location is the cytoplasm. The catalysed reaction is 2 a Fe(II)-siderophore + NAD(+) + H(+) = 2 a Fe(III)-siderophore + NADH. It carries out the reaction 2 a Fe(II)-siderophore + NADP(+) + H(+) = 2 a Fe(III)-siderophore + NADPH. Functionally, ferric-siderophore reductase involved in iron removal from the siderophores after their transport into the cell. Acts as a major ferric-aerobactin reductase catalyzing the reduction of Fe(3+)-aerobactin, a citrate-hydroxamate siderophore produced by other bacteria. Catalyzes reduction of Fe(3+)-vulnibactin, a catecholate siderophore synthesized by V.vulnificus, in the absence of VuuB. Catalyzes reduction of ferrioxamine B and Fe(3+)-vibriobactin in vitro. No activity with Fe(3+)-enterobactin. Catalyzes reduction of ferric chelating compound Fe(3+)-nitrilotriacetic acid (NTA) in the presence of NADH, NADPH or reduced glutathione (GSH) as its electron donor in vitro. Also catalyzes reduction of ferric chelating compounds Fe(3+)-citrate and Fe(3+)-EDTA as well as non-complexed FeCl3 in the presence of GSH as its electron donor in vitro. Highest activity with Fe(3+)-NTA as electron acceptor and GSH as donor. This chain is Ferric aerobactin reductase IutB, found in Vibrio vulnificus.